A 527-amino-acid chain; its full sequence is Transcription factor bHLH157 (527 aa).

Disordered stretches follow at residues 295–318 (SGVN…LFPQ) and 335–368 (SSIG…KDRQ). Positions 307 to 318 (TSSAHSSSLFPQ) are enriched in polar residues. A Nuclear localization signal motif is present at residues 341–348 (WKKPHEEG). A compositionally biased stretch (basic and acidic residues) spans 343 to 368 (KPHEEGVKKKRAKAGESRRPRPKDRQ). Positions 354–403 (AKAGESRRPRPKDRQMIQDRIKELRGMIPNGAKCSIDTLLDLTIKHMVFM) constitute a bHLH domain.

The protein belongs to the bHLH protein family. LHW subfamily. As to quaternary structure, homodimer.

The protein resides in the nucleus. Transcription factor that may regulate root development. The chain is Transcription factor bHLH157 (BHLH157) from Arabidopsis thaliana (Mouse-ear cress).